The following is a 278-amino-acid chain: Neuronal membrane glycoprotein M6-a (278 aa).

Met-1 is subject to N-acetylmethionine. The Cytoplasmic portion of the chain corresponds to 1–22; the sequence is MEENMEEGQTQKGCFECCIKCL. The chain crosses the membrane as a helical span at residues 23–43; sequence GGIPYASLIATILLYAGVALF. The Extracellular segment spans residues 44–84; that stretch reads CGCGHEALSGTVNILQTYFEMARTAGDTLDVFTMIDIFKYV. Residues 85–105 traverse the membrane as a helical segment; it reads IYGIAAAFFVYGILLMVEGFF. Residues 106-127 lie on the Cytoplasmic side of the membrane; sequence TTGAIKDLYGDFKITTCGRCVS. Residues 128–148 traverse the membrane as a helical segment; that stretch reads AWFIMLTYLFMLAWLGVTAFT. The Extracellular portion of the chain corresponds to 149-213; the sequence is SLPVYMYFNV…STELNMTFHL (65 aa). N-linked (GlcNAc...) asparagine glycosylation occurs at Asn-164. Cys-174 and Cys-192 form a disulfide bridge. A glycan (N-linked (GlcNAc...) asparagine) is linked at Asn-208. Residues 214-234 form a helical membrane-spanning segment; the sequence is FIVALAGAGAAVIAMVHYLMV. The Cytoplasmic portion of the chain corresponds to 235–278; it reads LSANWAYVKDACRMQKYEDIKSKEEQELHDIHSTRSKERLNAYT. Ser-256 is modified (phosphoserine). A Phosphothreonine modification is found at Thr-278.

This sequence belongs to the myelin proteolipid protein family. Interacts with OPRM1. Interacts with palmitoyltransferase ZDHHC17/HIP14; the interaction leads to palmitoylation of GPM6A. In terms of processing, N-glycosylated. Post-translationally, palmitoylated by ZDHHC17/HIP14. Expressed in hippocampus (at protein level). Isoform 1 is the predominant isoform expressed in brain, specifically in hippocampus. Isoform 2 is expressed at low levels in brain and kidney.

The protein localises to the cell membrane. It is found in the cell projection. Its subcellular location is the axon. The protein resides in the growth cone. It localises to the dendritic spine. The protein localises to the filopodium. It is found in the neuron projection. In terms of biological role, involved in neuronal differentiation, including differentiation and migration of neuronal stem cells. Plays a role in neuronal plasticity and is involved in neurite and filopodia outgrowth, filopodia motility and probably synapse formation. Gpm6a-induced filopodia formation involves mitogen-activated protein kinase (MAPK) and Src signaling pathways. May be involved in neuronal NGF-dependent Ca(2+) influx. May be involved in regulation of endocytosis and intracellular trafficking of G-protein-coupled receptors (GPCRs); enhances internalization and recycling of mu-type opioid receptor. In Rattus norvegicus (Rat), this protein is Neuronal membrane glycoprotein M6-a (Gpm6a).